Reading from the N-terminus, the 732-residue chain is Calcineurin-interacting protein 2 (732 aa).

Disordered regions lie at residues 1 to 24 (MNRG…REPY), 115 to 169 (DYEP…ALPK), 181 to 232 (QKKD…LDDR), 310 to 351 (ILSR…TSRR), 372 to 397 (RSQS…STVS), and 426 to 708 (QTVT…PLEE). Residues 8-17 (YNRSRSTSSR) are compositionally biased toward polar residues. Over residues 117–129 (EPLRKEPELKEQK) the composition is skewed to basic and acidic residues. Composition is skewed to polar residues over residues 151–163 (SGIT…SSRT) and 189–208 (IPRQ…NNEL). Residues 312 to 323 (SRSVSTSPSSVT) show a composition bias toward low complexity. Positions 324 to 351 (DNIPKTSTSRIPSSENPKTMEHTTTSRR) are enriched in polar residues. Residues 426–439 (QTVTNVRVPSSRGS) show a composition bias toward polar residues. Basic and acidic residues-rich tracts occupy residues 526 to 538 (QSPE…RFAD) and 546 to 557 (PGDHQAREEDLP). The span at 607 to 619 (SVTPSEKSLPRNS) shows a compositional bias: polar residues. Residues 688–705 (NSPNKSSSSSKARPSAAP) are compositionally biased toward low complexity.

As to quaternary structure, interacts with tax-6. In terms of tissue distribution, expressed in intestine.

The polypeptide is Calcineurin-interacting protein 2 (Caenorhabditis elegans).